Here is a 122-residue protein sequence, read N- to C-terminus: Putative iron-sulfur cluster insertion protein ErpA (122 aa).

Residues C50, C114, and C116 each coordinate iron-sulfur cluster.

It belongs to the HesB/IscA family. As to quaternary structure, homodimer. It depends on iron-sulfur cluster as a cofactor.

In terms of biological role, required for insertion of 4Fe-4S clusters. The protein is Putative iron-sulfur cluster insertion protein ErpA of Bordetella petrii (strain ATCC BAA-461 / DSM 12804 / CCUG 43448).